The sequence spans 142 residues: Hemoglobin subunit alpha (142 aa).

Ser-1 is subject to N-acetylserine. A Globin domain is found at 1-142 (SLSDKDKAAV…VALALAERYR (142 aa)). His-59 contributes to the O2 binding site. His-88 is a binding site for heme b.

It belongs to the globin family. Heterotetramer of two alpha chains and two beta chains. As to expression, red blood cells.

Its function is as follows. Involved in oxygen transport from gills to the various peripheral tissues. The chain is Hemoglobin subunit alpha (hba) from Gymnodraco acuticeps (Antarctic dragonfish).